The primary structure comprises 346 residues: Ribosomal RNA small subunit methyltransferase H (346 aa).

Residues Gly46–Tyr48, Asp63, Phe90, Asp113, and Gln120 each bind S-adenosyl-L-methionine. The interval Gly270–Ser346 is disordered.

This sequence belongs to the methyltransferase superfamily. RsmH family.

Its subcellular location is the cytoplasm. The catalysed reaction is cytidine(1402) in 16S rRNA + S-adenosyl-L-methionine = N(4)-methylcytidine(1402) in 16S rRNA + S-adenosyl-L-homocysteine + H(+). Its function is as follows. Specifically methylates the N4 position of cytidine in position 1402 (C1402) of 16S rRNA. This Brucella abortus (strain S19) protein is Ribosomal RNA small subunit methyltransferase H.